We begin with the raw amino-acid sequence, 569 residues long: Protein THEMIS3 (569 aa).

CABIT regions lie at residues M1–D254 and R255–S523.

It belongs to the themis family. In terms of tissue distribution, specifically expressed in the intestine.

The polypeptide is Protein THEMIS3 (Themis3) (Mus musculus (Mouse)).